The following is a 200-amino-acid chain: Glycerol-3-phosphate acyltransferase (200 aa).

Transmembrane regions (helical) follow at residues methionine 1–glycine 21, glycine 53–alanine 73, tryptophan 81–glycine 101, methionine 114–isoleucine 134, and isoleucine 139–glycine 159.

It belongs to the PlsY family. In terms of assembly, probably interacts with PlsX.

The protein localises to the cell inner membrane. The enzyme catalyses an acyl phosphate + sn-glycerol 3-phosphate = a 1-acyl-sn-glycero-3-phosphate + phosphate. It participates in lipid metabolism; phospholipid metabolism. Its function is as follows. Catalyzes the transfer of an acyl group from acyl-phosphate (acyl-PO(4)) to glycerol-3-phosphate (G3P) to form lysophosphatidic acid (LPA). This enzyme utilizes acyl-phosphate as fatty acyl donor, but not acyl-CoA or acyl-ACP. The protein is Glycerol-3-phosphate acyltransferase of Synechococcus sp. (strain CC9902).